The chain runs to 553 residues: Dihydroxy-acid dehydratase (553 aa).

Residue Asp-78 participates in Mg(2+) binding. Cys-119 is a [2Fe-2S] cluster binding site. Residues Asp-120 and Lys-121 each coordinate Mg(2+). N6-carboxylysine is present on Lys-121. Cys-193 is a binding site for [2Fe-2S] cluster. Position 441 (Glu-441) interacts with Mg(2+). Ser-467 acts as the Proton acceptor in catalysis.

This sequence belongs to the IlvD/Edd family. Homodimer. It depends on [2Fe-2S] cluster as a cofactor. Requires Mg(2+) as cofactor.

The catalysed reaction is (2R)-2,3-dihydroxy-3-methylbutanoate = 3-methyl-2-oxobutanoate + H2O. It carries out the reaction (2R,3R)-2,3-dihydroxy-3-methylpentanoate = (S)-3-methyl-2-oxopentanoate + H2O. It participates in amino-acid biosynthesis; L-isoleucine biosynthesis; L-isoleucine from 2-oxobutanoate: step 3/4. Its pathway is amino-acid biosynthesis; L-valine biosynthesis; L-valine from pyruvate: step 3/4. Functions in the biosynthesis of branched-chain amino acids. Catalyzes the dehydration of (2R,3R)-2,3-dihydroxy-3-methylpentanoate (2,3-dihydroxy-3-methylvalerate) into 2-oxo-3-methylpentanoate (2-oxo-3-methylvalerate) and of (2R)-2,3-dihydroxy-3-methylbutanoate (2,3-dihydroxyisovalerate) into 2-oxo-3-methylbutanoate (2-oxoisovalerate), the penultimate precursor to L-isoleucine and L-valine, respectively. In Trichlorobacter lovleyi (strain ATCC BAA-1151 / DSM 17278 / SZ) (Geobacter lovleyi), this protein is Dihydroxy-acid dehydratase.